An 840-amino-acid polypeptide reads, in one-letter code: Protein translocase subunit SecA (840 aa).

ATP-binding positions include glutamine 87, 105-109 (GEGKT), and aspartate 494. Residues 518–537 (RRIDNQLRGRSGRQGDPGSS) are disordered. Residues cysteine 826, cysteine 828, cysteine 837, and cysteine 838 each contribute to the Zn(2+) site.

Belongs to the SecA family. In terms of assembly, monomer and homodimer. Part of the essential Sec protein translocation apparatus which comprises SecA, SecYEG and auxiliary proteins SecDF-YajC and YidC. Zn(2+) serves as cofactor.

Its subcellular location is the cell inner membrane. The protein localises to the cytoplasm. It carries out the reaction ATP + H2O + cellular proteinSide 1 = ADP + phosphate + cellular proteinSide 2.. In terms of biological role, part of the Sec protein translocase complex. Interacts with the SecYEG preprotein conducting channel. Has a central role in coupling the hydrolysis of ATP to the transfer of proteins into and across the cell membrane, serving as an ATP-driven molecular motor driving the stepwise translocation of polypeptide chains across the membrane. In Desulforapulum autotrophicum (strain ATCC 43914 / DSM 3382 / VKM B-1955 / HRM2) (Desulfobacterium autotrophicum), this protein is Protein translocase subunit SecA.